A 1787-amino-acid polypeptide reads, in one-letter code: Chromodomain-helicase-DNA-binding protein 3 homolog (1787 aa).

Disordered regions lie at residues 1-80 and 170-258; these read MSDD…PDPY and PVTP…KEQG. Residues 10 to 43 show a composition bias toward acidic residues; it reads DGDETMEEDSMLAEGHEDGEEDVGEDEEEVETEE. Positions 56-71 are enriched in basic residues; the sequence is PPPKKKKGGKKSSKKK. Basic and acidic residues predominate over residues 192-243; that stretch reads DGSDGEGGGHDSDQEFEALIKQHEKQQDEAEKGKEEARINRAAAKVDKRKAA. 2 consecutive PHD-type zinc fingers follow at residues 265–312 and 328–375; these read QENC…CEEH and MDYC…CIIP. 2 consecutive Chromo domains span residues 373–476 and 501–583; these read IIPE…STLS and MQIH…GPKE. The region spanning 628–812 is the Helicase ATP-binding domain; it reads RHCWSNGTDA…FHLLNFLAPD (185 aa). Residue 641-648 participates in ATP binding; it reads DEMGLGKT. Positions 763–766 match the DEAH box motif; that stretch reads DEAH. A Helicase C-terminal domain is found at 944 to 1107; it reads LLQKMLRKLK…GKSMSKTELD (164 aa). 4 disordered regions span residues 1120 to 1141, 1186 to 1212, 1248 to 1295, and 1754 to 1787; these read EEEA…PNEQ, TKEA…QDPN, ENMG…EERS, and RASS…YPRY. Positions 1190-1199 are enriched in acidic residues; it reads DDADDDEDET. Polar residues predominate over residues 1248-1261; it reads ENMGQDWSAQNNQQ. Positions 1761-1773 are enriched in basic and acidic residues; that stretch reads TKDEPMDTSDKDI.

The protein belongs to the SNF2/RAD54 helicase family. Expressed in the head and vulva.

It is found in the nucleus. The enzyme catalyses ATP + H2O = ADP + phosphate + H(+). In terms of biological role, ATP-dependent chromatin-remodeling factor that has a role in notch signaling-dependent vulval cell fate determination. May also have a role in pharyngeal precursor cell specification. The chain is Chromodomain-helicase-DNA-binding protein 3 homolog (chd-3) from Caenorhabditis elegans.